The chain runs to 101 residues: uncharacterized protein (101 aa).

The N-terminal stretch at 1–27 is a signal peptide; the sequence is MQLTGSIYPWFTAYALLKSTLMELINS. Transmembrane regions (helical) follow at residues 42-64 and 79-98; these read LVPY…AISF and TFVF…NTFL.

It localises to the cytoplasm. Its subcellular location is the nucleus membrane. This is an uncharacterized protein from Schizosaccharomyces pombe (strain 972 / ATCC 24843) (Fission yeast).